The sequence spans 137 residues: Large ribosomal subunit protein uL16 (137 aa).

It belongs to the universal ribosomal protein uL16 family. In terms of assembly, part of the 50S ribosomal subunit.

Binds 23S rRNA and is also seen to make contacts with the A and possibly P site tRNAs. The protein is Large ribosomal subunit protein uL16 of Lactococcus lactis subsp. lactis (strain IL1403) (Streptococcus lactis).